The primary structure comprises 330 residues: Ribose operon repressor (330 aa).

Residues 2–56 form the HTH lacI-type domain; sequence ATMKDVARLAGVSTSTVSHVINKDRFVSEAITAKVEAAIKELNYAPSALARSLKL. The H-T-H motif DNA-binding region spans 4–23; it reads MKDVARLAGVSTSTVSHVIN.

In terms of biological role, transcriptional repressor for the ribose rbsDACBK operon. RbsR binds to a region of perfect dyad symmetry spanning the rbs operon transcriptional start site. The affinity for the rbs operator is reduced by addition of ribose, consistent with ribose being the inducer of the operon. The chain is Ribose operon repressor (rbsR) from Escherichia coli O6:H1 (strain CFT073 / ATCC 700928 / UPEC).